Here is a 105-residue protein sequence, read N- to C-terminus: MATLQQQKIRIRLQAFDRRLLDTSCEKIVDTANRTNATAIGPIPLPTKRKIYCVLRSPHVDKDSREHFETRTHRRIIDIYQPSSKTIDALMKLDLPSGVDIEVKL.

The protein belongs to the universal ribosomal protein uS10 family. Part of the 30S ribosomal subunit.

In terms of biological role, involved in the binding of tRNA to the ribosomes. The sequence is that of Small ribosomal subunit protein uS10 from Trichormus variabilis (strain ATCC 29413 / PCC 7937) (Anabaena variabilis).